The sequence spans 65 residues: Toxin Cbo5 (65 aa).

The region spanning 2–65 is the LCN-type CS-alpha/beta domain; it reads KDGYLVDKTG…QTWPLPNKSC (64 aa). Disulfide bonds link cysteine 12/cysteine 65, cysteine 16/cysteine 41, cysteine 25/cysteine 46, and cysteine 29/cysteine 48.

Belongs to the long (4 C-C) scorpion toxin superfamily. Sodium channel inhibitor family. Beta subfamily. As to expression, expressed by the venom gland.

It is found in the secreted. Functionally, a probable toxin that has no activity on the tested sodium channels (when tested at 200 nM) and is not toxic to mice, crickets or sweet water shrimps. It resembles Beta toxins that bind voltage-independently at site-4 of sodium channels and shift the voltage of activation toward more negative potentials, thereby affecting sodium channel activation and promoting spontaneous and repetitive firing. The protein is Toxin Cbo5 of Centruroides bonito (Scorpion).